Here is a 476-residue protein sequence, read N- to C-terminus: Protein Cep89 homolog (476 aa).

Disordered regions lie at residues 1–29 (MSTRNVMITDLDQPDPNQQQHHQNPKKNR) and 172–193 (LGEGAPTCGGSTKVSSSSAPYP). A compositionally biased stretch (polar residues) spans 180–190 (GGSTKVSSSSA).

The protein resides in the cytoplasm. Its subcellular location is the cytosol. It is found in the mitochondrion intermembrane space. Required for mitochondrial complex IV activity. May be involved in non-associative learning. This Drosophila melanogaster (Fruit fly) protein is Protein Cep89 homolog (Cep89).